The chain runs to 109 residues: Large ribosomal subunit protein uL24 (109 aa).

The protein belongs to the universal ribosomal protein uL24 family. In terms of assembly, part of the 50S ribosomal subunit.

Functionally, one of two assembly initiator proteins, it binds directly to the 5'-end of the 23S rRNA, where it nucleates assembly of the 50S subunit. One of the proteins that surrounds the polypeptide exit tunnel on the outside of the subunit. This Ehrlichia canis (strain Jake) protein is Large ribosomal subunit protein uL24.